A 143-amino-acid chain; its full sequence is Large ribosomal subunit protein uL15 (143 aa).

The tract at residues 1–54 (MELNSIKPAEGAKHAKRRVGRGIGSGLGKTAGRGHKGQKSRSGGYHKVGFEGGQ) is disordered. A compositionally biased stretch (gly residues) spans 21–31 (RGIGSGLGKTA).

This sequence belongs to the universal ribosomal protein uL15 family. In terms of assembly, part of the 50S ribosomal subunit.

Its function is as follows. Binds to the 23S rRNA. This Paracidovorax citrulli (strain AAC00-1) (Acidovorax citrulli) protein is Large ribosomal subunit protein uL15.